We begin with the raw amino-acid sequence, 386 residues long: MAP kinase-activated protein kinase 2 (386 aa).

The interval 1–29 (MLSGSPGQTPPAPFPSPPPPAPAQPPPPF) is disordered. A compositionally biased stretch (pro residues) spans 8–29 (QTPPAPFPSPPPPAPAQPPPPF). Positions 50 to 311 (KVTSQVLGLG…ITEFMNHPWI (262 aa)) constitute a Protein kinase domain. ATP-binding positions include 56–64 (LGLGINGKV) and Lys79. Position 125 to 127 (125 to 127 (ECL)) interacts with staurosporine. Asp172 (proton acceptor) is an active-site residue. Position 208 is a phosphothreonine; by MAPK14 (Thr208). Phosphoserine; by MAPK14 is present on Ser258. Residue Ser314 is modified to Phosphoserine; by autocatalysis. The interval 314-350 (STKVPQTPLHTSRVLKEDKERWEDVKEEMTSALATMR) is autoinhibitory helix. Phosphothreonine; by MAPK14 is present on Thr320. Short sequence motifs (nuclear export signal (NES)) lie at residues 331–354 (DKER…VDYE) and 342–351 (MTSALATMRV). Lys339 participates in a covalent cross-link: Glycyl lysine isopeptide (Lys-Gly) (interchain with G-Cter in SUMO). The p38 MAPK-binding site stretch occupies residues 352 to 376 (DYEQIKIKKIEDASNPLLLKRRKKA). 2 short sequence motifs (bipartite nuclear localization signal) span residues 357 to 360 (KIKK) and 371 to 375 (KRRKK).

This sequence belongs to the protein kinase superfamily. CAMK Ser/Thr protein kinase family. As to quaternary structure, heterodimer with p38-alpha/MAPK14; this heterodimer forms a stable complex: molecules are positioned 'face to face' so that the ATP-binding sites of both kinases are at the heterodimer interface. Interacts with PHC2. Interacts with HSF1. Sumoylation inhibits the protein kinase activity. Post-translationally, phosphorylated and activated by MAP kinase p38-alpha/MAPK14 at Thr-208; Ser-258 and Thr-320. In terms of tissue distribution, ubiquitously expressed (at protein level).

It localises to the cytoplasm. The protein localises to the nucleus. It catalyses the reaction L-seryl-[protein] + ATP = O-phospho-L-seryl-[protein] + ADP + H(+). It carries out the reaction L-threonyl-[protein] + ATP = O-phospho-L-threonyl-[protein] + ADP + H(+). With respect to regulation, activated following phosphorylation by p38-alpha/MAPK14 following various stresses. Inhibited following sumoylation. Specifically inhibited by pyrrolopyridine inhibitors. In terms of biological role, stress-activated serine/threonine-protein kinase involved in cytokine production, endocytosis, reorganization of the cytoskeleton, cell migration, cell cycle control, chromatin remodeling, DNA damage response and transcriptional regulation. Following stress, it is phosphorylated and activated by MAP kinase p38-alpha/MAPK14, leading to phosphorylation of substrates. Phosphorylates serine in the peptide sequence, Hyd-X-R-X(2)-S, where Hyd is a large hydrophobic residue. Phosphorylates ALOX5, CDC25B, CDC25C, CEP131, ELAVL1, HNRNPA0, HSP27/HSPB1, KRT18, KRT20, LIMK1, LSP1, PABPC1, PARN, PDE4A, RCSD1, RPS6KA3, TAB3 and TTP/ZFP36. Phosphorylates HSF1; leading to the interaction with HSP90 proteins and inhibiting HSF1 homotrimerization, DNA-binding and transactivation activities. Mediates phosphorylation of HSP27/HSPB1 in response to stress, leading to dissociation of HSP27/HSPB1 from large small heat-shock protein (sHsps) oligomers and impairment of their chaperone activities and ability to protect against oxidative stress effectively. Involved in inflammatory response by regulating tumor necrosis factor (TNF) and IL6 production post-transcriptionally: acts by phosphorylating AU-rich elements (AREs)-binding proteins ELAVL1, HNRNPA0, PABPC1 and TTP/ZFP36, leading to regulation of the stability and translation of TNF and IL6 mRNAs. Phosphorylation of TTP/ZFP36, a major post-transcriptional regulator of TNF, promotes its binding to 14-3-3 proteins and reduces its ARE mRNA affinity leading to inhibition of dependent degradation of ARE-containing transcripts. Phosphorylates CEP131 in response to cellular stress following ultraviolet irradiation which promotes binding of CEP131 to 14-3-3 proteins and inhibits formation of novel centriolar satellites. Also involved in late G2/M checkpoint following DNA damage through a process of post-transcriptional mRNA stabilization: following DNA damage, relocalizes from nucleus to cytoplasm and phosphorylates HNRNPA0 and PARN, leading to stabilization of GADD45A mRNA. Involved in toll-like receptor signaling pathway (TLR) in dendritic cells: required for acute TLR-induced macropinocytosis by phosphorylating and activating RPS6KA3. The chain is MAP kinase-activated protein kinase 2 (Mapkapk2) from Mus musculus (Mouse).